A 112-amino-acid chain; its full sequence is Putative pterin-4-alpha-carbinolamine dehydratase (112 aa).

Belongs to the pterin-4-alpha-carbinolamine dehydratase family.

It carries out the reaction (4aS,6R)-4a-hydroxy-L-erythro-5,6,7,8-tetrahydrobiopterin = (6R)-L-erythro-6,7-dihydrobiopterin + H2O. The chain is Putative pterin-4-alpha-carbinolamine dehydratase from Vibrio parahaemolyticus serotype O3:K6 (strain RIMD 2210633).